The sequence spans 489 residues: Membrane-bound acylglycerophosphatidylinositol O-acyltransferase frj (489 aa).

The next 3 membrane-spanning stretches (helical) occupy residues 2 to 22 (SIDD…GSYV), 40 to 60 (VLVV…SLAL), and 75 to 95 (LVTF…DFYF). Active-site residues include Asn-331 and His-364. A run of 2 helical transmembrane segments spans residues 405–425 (VIFW…FLLS) and 433–453 (FYSS…ALGF).

It belongs to the membrane-bound acyltransferase family.

Its subcellular location is the membrane. It catalyses the reaction a 1-acyl-sn-glycero-3-phospho-(1D-myo-inositol) + (5Z,8Z,11Z,14Z)-eicosatetraenoyl-CoA = a 1-acyl-2-(5Z,8Z,11Z,14Z-eicosatetraenoyl)-sn-glycero-3-phospho-(1D-myo-inositol) + CoA. It carries out the reaction a 1-acyl-sn-glycero-3-phosphocholine + an acyl-CoA = a 1,2-diacyl-sn-glycero-3-phosphocholine + CoA. The catalysed reaction is (9Z)-hexadecenoyl-CoA + 1-hexadecanoyl-sn-glycero-3-phosphocholine = 1-hexadecanoyl-2-(9Z-hexadecenoyl)-sn-glycero-3-phosphocholine + CoA. The enzyme catalyses a 1-acyl-sn-glycero-3-phospho-L-serine + an acyl-CoA = a 1,2-diacyl-sn-glycero-3-phospho-L-serine + CoA. It catalyses the reaction 1-(9Z-octadecenoyl)-sn-glycero-3-phospho-L-serine + (9Z)-hexadecenoyl-CoA = 1-(9Z-octadecenoyl)-2-(9Z-hexadecenoyl)-sn-glycero-3-phospho-L-serine + CoA. It carries out the reaction a 1-acyl-sn-glycero-3-phosphoethanolamine + an acyl-CoA = a 1,2-diacyl-sn-glycero-3-phosphoethanolamine + CoA. The catalysed reaction is 1-hexadecanoyl-sn-glycero-3-phosphoethanolamine + (9Z)-hexadecenoyl-CoA = 1-hexadecanoyl-2-(9Z)-hexadecenoyl-sn-glycero-3-phosphoethanolamine + CoA. It functions in the pathway lipid metabolism; phospholipid metabolism. Functionally, acyltransferase that mediates the acylation of lysophospholipids to produce phospholipids (glycerophospholipids). Highest activity with lysophosphatidylinositol (1-acyl-sn-glycero-3-phospho-(1D-myo-inositol) or LPI) producing phosphatidylinositol (1,2-diacyl-sn-glycero-3-phospho-(1D-myo-inositol) or PI) (LPIAT activity), but also converts lysophosphatidylcholine (1-acyl-sn-glycero-3-phosphocholine or LPC) to phosphatidylcholine (1,2-diacyl-sn-glycero-3-phosphocholine or PC) (LPCAT activity), lysophosphatidylserine (1-acyl-2-hydroxy-sn-glycero-3-phospho-L-serine or LPS) to phosphatidylserine (1,2-diacyl-sn-glycero-3-phospho-L-serine or PS) (LPSAT activity), and lysophosphatidylethanolamine (1-acyl-sn-glycero-3-phosphoethanolamine or LPE) producing phosphatidylethanolamine (1,2-diacyl-sn-glycero-3-phosphoethanolamine or PE) (LPEAT activity). Has a preference for unsaturated fatty acid arachidonoyl-CoA ((5Z,8Z,11Z,14Z)-eicosatetraenoyl-CoA). Glycerophospholipids are important structural and functional components of cellular membrane, acyl-chain remodeling regulates the molecular species distribution of glycerophospholipids which can affect membrane fluidity and curvature. This chain is Membrane-bound acylglycerophosphatidylinositol O-acyltransferase frj, found in Drosophila melanogaster (Fruit fly).